Reading from the N-terminus, the 221-residue chain is CDC5 pindle pole body anchor protein 1 (221 aa).

The segment at 142–221 (KNIERDNLKP…PTEDSVPHAE (80 aa)) is disordered. Residues serine 158, serine 170, and serine 175 each carry the phosphoserine modification. The short motif at 165–170 (PLVTSS) is the CDC5-binding element. A compositionally biased stretch (polar residues) spans 166–188 (LVTSSPIHMSPLQSRQRPVSSLQ). The short motif at 189-195 (PPKGPNF) is the CLB3-docking element. The CDC14-binding signature appears at 200 to 202 (PKL).

In terms of assembly, interacts with CDC5 and CDC14. In terms of processing, phosphorylated by CLB3-CDK1 in metaphase which is required for correct localization at the nuclear envelop and the spindle pole body, and dephosphorylated by CDC14 in early anaphase.

Its subcellular location is the nucleus membrane. The protein localises to the cytoplasm. The protein resides in the cytoskeleton. It is found in the microtubule organizing center. It localises to the spindle pole body. Functionally, specialized component of the nuclear membrane that may be involved in the connection of the spindle pole body (SPB) to the nuclear envelope. Recruits CDC5 to spindle pole bodies in metaphase. This chain is CDC5 pindle pole body anchor protein 1, found in Saccharomyces cerevisiae (strain ATCC 204508 / S288c) (Baker's yeast).